The sequence spans 606 residues: RUN and FYVE domain-containing protein 2 (606 aa).

The RUN domain occupies 37–169 (DSDYPPLQQF…IDANLCVKGE (133 aa)). Positions 210-534 (EELNRQLNST…IKEANKALQG (325 aa)) form a coiled coil. An FYVE-type zinc finger spans residues 540–598 (DKEATHCKLCEKEFSLSKRKHHCRNCGEIFCNACSDNELPLPSSPKPVRVCDSCHALLI). Positions 546, 549, 562, 565, 570, 573, 590, and 593 each coordinate Zn(2+).

In terms of assembly, interacts with BMX. As to expression, expressed in brain, lung and testis.

It is found in the nucleus. The sequence is that of RUN and FYVE domain-containing protein 2 (RUFY2) from Homo sapiens (Human).